The chain runs to 444 residues: Ribosomal protein uS12 methylthiotransferase RimO (444 aa).

Residues 3–119 (IKIGLVSLGC…IARAVRRVLE (117 aa)) enclose the MTTase N-terminal domain. Positions 12, 48, 82, 156, 160, and 163 each coordinate [4Fe-4S] cluster. The 231-residue stretch at 142–372 (ATPPYTAYLK…MMLQQEISLQ (231 aa)) folds into the Radical SAM core domain. The 70-residue stretch at 375 to 444 (LKRVGEVIEV…EYDLTGETVL (70 aa)) folds into the TRAM domain.

Belongs to the methylthiotransferase family. RimO subfamily. [4Fe-4S] cluster is required as a cofactor.

Its subcellular location is the cytoplasm. It carries out the reaction L-aspartate(89)-[ribosomal protein uS12]-hydrogen + (sulfur carrier)-SH + AH2 + 2 S-adenosyl-L-methionine = 3-methylsulfanyl-L-aspartate(89)-[ribosomal protein uS12]-hydrogen + (sulfur carrier)-H + 5'-deoxyadenosine + L-methionine + A + S-adenosyl-L-homocysteine + 2 H(+). In terms of biological role, catalyzes the methylthiolation of an aspartic acid residue of ribosomal protein uS12. The chain is Ribosomal protein uS12 methylthiotransferase RimO from Pelotomaculum thermopropionicum (strain DSM 13744 / JCM 10971 / SI).